A 425-amino-acid chain; its full sequence is Fe(2+) transport protein 3, chloroplastic (425 aa).

A helical membrane pass occupies residues 65 to 85; it reads FVAIASILLAGAAGVTIPLIG. Residues 86-97 are Cytoplasmic-facing; it reads RNRRFLQTDGNL. The helical transmembrane segment at 98-118 threads the bilayer; it reads FVTAKAFAAGVILATGFVHML. Over 119-137 the chain is Lumenal; sequence AGGTEALKNPCLPDFPWSK. The helical transmembrane segment at 138 to 158 threads the bilayer; it reads FPFPGFFAMIAALITLFVDFM. Over 159–269 the chain is Cytoplasmic; sequence GTQYYERKQE…GLDAVNGARH (111 aa). A helical transmembrane segment spans residues 270-290; the sequence is IVVSQVLELGIVSHSIIIGLS. Topologically, residues 291–301 are lumenal; the sequence is LGVSQSPCTIR. A helical membrane pass occupies residues 302-322; it reads PLIAALSFHQFFEGFALGGCI. Residues 323–333 lie on the Cytoplasmic side of the membrane; that stretch reads SQAQFRNKSAT. The chain crosses the membrane as a helical span at residues 334–354; sequence IMACFFALTTPIGIGIGTAVA. Residues 355-369 lie on the Lumenal side of the membrane; that stretch reads SSFNSHSVGALVTEG. The chain crosses the membrane as a helical span at residues 370–390; it reads ILDSLSAGILVYMALVDLIAA. Residues 391-404 are Cytoplasmic-facing; sequence DFLSTKMRCNFRLQ. The chain crosses the membrane as a helical span at residues 405–425; that stretch reads IVSYVMLFLGAGLMSSLAIWA.

The protein belongs to the ZIP transporter (TC 2.A.5) family.

The protein localises to the plastid. It localises to the chloroplast thylakoid membrane. May play a role in the transport of iron in the plastids. The polypeptide is Fe(2+) transport protein 3, chloroplastic (IRT3) (Arabidopsis thaliana (Mouse-ear cress)).